The chain runs to 319 residues: Phospho-N-acetylmuramoyl-pentapeptide-transferase (319 aa).

Transmembrane regions (helical) follow at residues 1 to 21, 53 to 73, 77 to 97, 117 to 137, 140 to 160, 172 to 192, 195 to 215, 221 to 241, 249 to 269, and 298 to 318; these read MSIL…FLLM, TMGG…VGAW, LNGT…IGMW, FLAQ…EGFQ, FGLT…MVGF, GLVT…ALVQ, TEVA…FPFN, IFMG…VALV, LIIG…VAYF, and GVFW…ILFL.

Belongs to the glycosyltransferase 4 family. MraY subfamily. Mg(2+) serves as cofactor.

It localises to the cell membrane. The enzyme catalyses UDP-N-acetyl-alpha-D-muramoyl-L-alanyl-gamma-D-glutamyl-L-lysyl-D-alanyl-D-alanine + di-trans,octa-cis-undecaprenyl phosphate = Mur2Ac(oyl-L-Ala-gamma-D-Glu-L-Lys-D-Ala-D-Ala)-di-trans,octa-cis-undecaprenyl diphosphate + UMP. It functions in the pathway cell wall biogenesis; peptidoglycan biosynthesis. Its function is as follows. Catalyzes the initial step of the lipid cycle reactions in the biosynthesis of the cell wall peptidoglycan: transfers peptidoglycan precursor phospho-MurNAc-pentapeptide from UDP-MurNAc-pentapeptide onto the lipid carrier undecaprenyl phosphate, yielding undecaprenyl-pyrophosphoryl-MurNAc-pentapeptide, known as lipid I. This Limosilactobacillus fermentum (strain NBRC 3956 / LMG 18251) (Lactobacillus fermentum) protein is Phospho-N-acetylmuramoyl-pentapeptide-transferase.